The sequence spans 124 residues: Protein CYSTEINE-RICH TRANSMEMBRANE MODULE 10 (124 aa).

Positions Met1 to Ser103 are disordered. 2 stretches are compositionally biased toward pro residues: residues Ala27–Tyr40 and Gly65–His88. The chain crosses the membrane as a helical span at residues Lys101 to Val118.

This sequence belongs to the CYSTM1 family. In terms of assembly, heterodimers. Interacts with CYSTM7 and WIH1/CYSTM13. As to expression, mostly expressed in stems and,at low levels, in stems, roots, flowers, siliques and leaves.

It localises to the cell membrane. The protein localises to the cytoplasm. In terms of biological role, involved in resistance to abiotic stress. The polypeptide is Protein CYSTEINE-RICH TRANSMEMBRANE MODULE 10 (Arabidopsis thaliana (Mouse-ear cress)).